A 186-amino-acid polypeptide reads, in one-letter code: Shikimate kinase (186 aa).

15 to 20 (GAGKTT) lines the ATP pocket. Thr-19 contacts Mg(2+). 3 residues coordinate substrate: Asp-37, Arg-61, and Gly-83. Residue Arg-121 coordinates ATP. Arg-140 is a binding site for substrate.

It belongs to the shikimate kinase family. As to quaternary structure, monomer. It depends on Mg(2+) as a cofactor.

The protein localises to the cytoplasm. It carries out the reaction shikimate + ATP = 3-phosphoshikimate + ADP + H(+). It functions in the pathway metabolic intermediate biosynthesis; chorismate biosynthesis; chorismate from D-erythrose 4-phosphate and phosphoenolpyruvate: step 5/7. Its function is as follows. Catalyzes the specific phosphorylation of the 3-hydroxyl group of shikimic acid using ATP as a cosubstrate. In Psychrobacter arcticus (strain DSM 17307 / VKM B-2377 / 273-4), this protein is Shikimate kinase.